Here is a 1090-residue protein sequence, read N- to C-terminus: MNSSDVQMMSSQDAPGSAGLAPDNIASSLPSKKKSRRGADPTNQKRRCVSTACIACRRRKSKCDGALPSCAACASVYGTECIYDPNSDHRRKGVYREKNDSMKAQNATLQILIEAILNASEEDVIDIVRRIRTCDDLDEVAESIRRDEKNATATNDNDDSDEPTQPGRDDATSQAVEGERDLARKMGELRIENGSVRFIGGTSHLIYLSEPTDASEEPELETRLSTCDENPITTWTEVTKNPQLIIHLVNMYFNWHYPYFTTLSRSLFYRDFIKGKPAGQPRSTVYCSSLLVNAMLALGCHFTSVDGAFAVPGDSRTKGDHFFAEAKRLIVQNDEYEKPRLTTVQALALMSVREAGCGREAKGWVYSGMSFRMAQDIGLNLDIGSLDEKEVDARRITFWGCFVFDKCWSNYLGRLPQLPKNTYNVPKYDVFPDEDAELWSPYTDAGFDQSCKQPSRTRAIGLQLSKLCEISSDLLLFFYHPSHIGRSSGKSAELKKLSELHRRLEDWRTELPKEFEPKDGQLPNVILMHMFYHLQYIHLFRPFLKYTKEASPLEKVQPRRICTTNANSISKLMRLYKKLYNLRQICNIAVYMLHSACTIHMLNLPEKTARRDITHGVRQLEEMAEDWPCARRTLGIISVLARKWNVELPEEAAIVLKRTDEKYGMFSTSEVPSPNRTAPSLAPSSPAPPYTPEASLLFSTTAAAVLEQQPYSPMTLYSHPTPPHLGPESISDPGMSPNIVTFSDLPDPSAPIIPQQQQNMQAISSLSQNNMLHQHHHHLQNQHQPQQPHHNHMTYQQQQHNLLTHPVSASSMSMSDTLATITAWGIPTSSPGNNNNNNIVSQHPHHQKQPQQQQQPQAQRYPTVGSVGTNTVKPPAAATQTFTPAQLHANNLATATRSTASNHKSVGRHVSPSSIYAIDGQDWYLKDGVTWQQGFQGWDLEGGGAGTATSTGGIGDGGGPTGGAGDSMARLAPRGNIGGGGGGGGGSTGQRQQQQQRQQQQQQQQQQQQQQQQQQQQQQQQQQQEANMFAYHHGAERGGGGIESTGMGMTTVGGGGGGFDPIGGSGLLDDLVGLDELGSLDGLGHLPGLD.

Residues 1–14 (MNSSDVQMMSSQDA) are compositionally biased toward polar residues. Residues 1–43 (MNSSDVQMMSSQDAPGSAGLAPDNIASSLPSKKKSRRGADPTN) are disordered. Positions 53 to 81 (CIACRRRKSKCDGALPSCAACASVYGTEC) form a DNA-binding region, zn(2)-C6 fungal-type. Disordered stretches follow at residues 145 to 176 (RRDEKNATATNDNDDSDEPTQPGRDDATSQAV), 666 to 689 (FSTSEVPSPNRTAPSLAPSSPAPP), 773 to 798 (HQHHHHLQNQHQPQQPHHNHMTYQQQ), 825 to 875 (GIPT…VKPP), 936 to 999 (QGWD…QRQQ), and 1033 to 1053 (HGAERGGGGIESTGMGMTTVG). Residues 167–176 (GRDDATSQAV) are compositionally biased toward basic and acidic residues. The segment covering 666-677 (FSTSEVPSPNRT) has biased composition (polar residues). Low complexity predominate over residues 849 to 859 (QPQQQQQPQAQ). Gly residues-rich tracts occupy residues 940–965 (LEGGGAGTATSTGGIGDGGGPTGGAG) and 976–988 (NIGGGGGGGGGST). Low complexity predominate over residues 990–999 (QRQQQQQRQQ).

The protein localises to the nucleus. In terms of biological role, pathway-specific regulatory gene of nitrate assimilation; it activates the transcription of the genes for nitrate and nitrite reductases. In Neurospora crassa (strain ATCC 24698 / 74-OR23-1A / CBS 708.71 / DSM 1257 / FGSC 987), this protein is Nitrogen assimilation transcription factor nit-4 (nit-4).